A 202-amino-acid chain; its full sequence is P25 protein (202 aa).

Positions 7–195 (VAIVIYSTYG…EIARIQGETF (189 aa)) constitute a Flavodoxin-like domain. At Ser181 the chain carries Phosphoserine.

The protein belongs to the WrbA family. As to quaternary structure, homodimer.

Its function is as follows. Unknown. Target of pap1 transcription factor. Confers brefeldin A resistance in S.pombe. In Schizosaccharomyces pombe (strain 972 / ATCC 24843) (Fission yeast), this protein is P25 protein (obr1).